Consider the following 241-residue polypeptide: Sugar fermentation stimulation protein homolog (241 aa).

This sequence belongs to the SfsA family.

This chain is Sugar fermentation stimulation protein homolog, found in Nostoc punctiforme (strain ATCC 29133 / PCC 73102).